We begin with the raw amino-acid sequence, 436 residues long: Chromosomal replication initiator protein DnaA (436 aa).

Residues 1-80 (MSHEAVWQHV…QAPRFELRVV (80 aa)) form a domain I, interacts with DnaA modulators region. The interval 80 to 100 (VPGVVVQEDIFQAAPAEAPRP) is domain II. The domain III, AAA+ region stretch occupies residues 101 to 317 (KLNPKYTFEN…GALMRAIAFA (217 aa)). ATP-binding residues include glycine 145, glycine 147, lysine 148, and threonine 149. Residues 318–436 (SLNGVELTRA…LLRTLREACT (119 aa)) form a domain IV, binds dsDNA region.

It belongs to the DnaA family. In terms of assembly, oligomerizes as a right-handed, spiral filament on DNA at oriC.

It localises to the cytoplasm. The enzyme catalyses ATP + H2O = ADP + phosphate + H(+). Plays an essential role in the initiation and regulation of chromosomal replication. ATP-DnaA binds to the origin of replication (oriC) to initiate formation of the DNA replication initiation complex once per cell cycle. Binds the DnaA box (a 9 base pair repeat at the origin) and separates the double-stranded (ds)DNA. Forms a right-handed helical filament on oriC DNA; dsDNA binds to the exterior of the filament while single-stranded (ss)DNA is stabiized in the filament's interior. The ATP-DnaA-oriC complex binds and stabilizes one strand of the AT-rich DNA unwinding element (DUE), permitting loading of DNA polymerase. After initiation quickly degrades to an ADP-DnaA complex that is not apt for DNA replication. Binds acidic phospholipids. In terms of biological role, the DnaA box consensus is 5'-TTATC[CA]A[CA]A-3' in this bacterium; oriC consists of 13 clustered DnaA boxes and a 40 base pair AT-rich region. ATP-DnaA binds cooperatively to multiple DnaA boxes, while ADP-DnaA binds with low cooperativity to the individual DnaA boxes. About 16-18 DnaA protein molecules bind their sites in oriC. Has a slow ATPase activity. Binds linear and supercoiled DNA. The polypeptide is Chromosomal replication initiator protein DnaA (Thermus thermophilus (strain ATCC 27634 / DSM 579 / HB8)).